Reading from the N-terminus, the 273-residue chain is Hydroxyethylthiazole kinase (273 aa).

Met49 lines the substrate pocket. ATP-binding residues include Lys125 and Thr171. Gly198 lines the substrate pocket.

Belongs to the Thz kinase family. Mg(2+) serves as cofactor.

It catalyses the reaction 5-(2-hydroxyethyl)-4-methylthiazole + ATP = 4-methyl-5-(2-phosphooxyethyl)-thiazole + ADP + H(+). The protein operates within cofactor biosynthesis; thiamine diphosphate biosynthesis; 4-methyl-5-(2-phosphoethyl)-thiazole from 5-(2-hydroxyethyl)-4-methylthiazole: step 1/1. Functionally, catalyzes the phosphorylation of the hydroxyl group of 4-methyl-5-beta-hydroxyethylthiazole (THZ). This Natranaerobius thermophilus (strain ATCC BAA-1301 / DSM 18059 / JW/NM-WN-LF) protein is Hydroxyethylthiazole kinase.